Here is a 497-residue protein sequence, read N- to C-terminus: Glycerol kinase (497 aa).

T21 serves as a coordination point for ADP. 2 residues coordinate ATP: T21 and T22. T21 contacts sn-glycerol 3-phosphate. R25 contributes to the ADP binding site. Positions 88, 89, 140, and 244 each coordinate sn-glycerol 3-phosphate. The glycerol site is built by R88, E89, Y140, D244, and Q245. ADP is bound by residues T266 and G309. ATP contacts are provided by T266, G309, Q313, and G410. Residues G410 and N414 each contribute to the ADP site.

Belongs to the FGGY kinase family.

It catalyses the reaction glycerol + ATP = sn-glycerol 3-phosphate + ADP + H(+). It participates in polyol metabolism; glycerol degradation via glycerol kinase pathway; sn-glycerol 3-phosphate from glycerol: step 1/1. Its activity is regulated as follows. Inhibited by fructose 1,6-bisphosphate (FBP). Functionally, key enzyme in the regulation of glycerol uptake and metabolism. Catalyzes the phosphorylation of glycerol to yield sn-glycerol 3-phosphate. The sequence is that of Glycerol kinase from Gloeobacter violaceus (strain ATCC 29082 / PCC 7421).